A 1088-amino-acid chain; its full sequence is ATP-dependent helicase/deoxyribonuclease subunit B (1088 aa).

It belongs to the helicase family. AddB/RexB type 2 subfamily. As to quaternary structure, heterodimer of AddA and RexB. The cofactor is Mg(2+).

Its function is as follows. The heterodimer acts as both an ATP-dependent DNA helicase and an ATP-dependent, dual-direction single-stranded exonuclease. Recognizes the chi site generating a DNA molecule suitable for the initiation of homologous recombination. This subunit has 5' -&gt; 3' nuclease activity but not helicase activity. The polypeptide is ATP-dependent helicase/deoxyribonuclease subunit B (Streptococcus suis (strain 98HAH33)).